The primary structure comprises 437 residues: Enolase (437 aa).

Gln162 contacts (2R)-2-phosphoglycerate. Glu204 acts as the Proton donor in catalysis. Asp251, Glu297, and Asp324 together coordinate Mg(2+). Positions 349, 378, 379, and 400 each coordinate (2R)-2-phosphoglycerate. Residue Lys349 is the Proton acceptor of the active site.

This sequence belongs to the enolase family. Mg(2+) is required as a cofactor.

The protein resides in the cytoplasm. It is found in the secreted. Its subcellular location is the cell surface. It carries out the reaction (2R)-2-phosphoglycerate = phosphoenolpyruvate + H2O. It participates in carbohydrate degradation; glycolysis; pyruvate from D-glyceraldehyde 3-phosphate: step 4/5. Functionally, catalyzes the reversible conversion of 2-phosphoglycerate (2-PG) into phosphoenolpyruvate (PEP). It is essential for the degradation of carbohydrates via glycolysis. This chain is Enolase, found in Chlorobium phaeovibrioides (strain DSM 265 / 1930) (Prosthecochloris vibrioformis (strain DSM 265)).